Consider the following 347-residue polypeptide: GMP reductase (347 aa).

Residue 108 to 131 (ADFEKTKQILDLNPALNFVCIDVA) participates in NADP(+) binding. K(+) is bound by residues glycine 181 and glycine 183. The Thioimidate intermediate role is filled by cysteine 186. 216-239 (IVSDGGCTTPGDVAKAFGGGADFV) contributes to the NADP(+) binding site.

Belongs to the IMPDH/GMPR family. GuaC type 1 subfamily. As to quaternary structure, homotetramer.

It catalyses the reaction IMP + NH4(+) + NADP(+) = GMP + NADPH + 2 H(+). Its function is as follows. Catalyzes the irreversible NADPH-dependent deamination of GMP to IMP. It functions in the conversion of nucleobase, nucleoside and nucleotide derivatives of G to A nucleotides, and in maintaining the intracellular balance of A and G nucleotides. This Shigella dysenteriae serotype 1 (strain Sd197) protein is GMP reductase.